A 58-amino-acid chain; its full sequence is Large ribosomal subunit protein uL30 (58 aa).

It belongs to the universal ribosomal protein uL30 family. As to quaternary structure, part of the 50S ribosomal subunit.

In Pseudomonas fluorescens (strain ATCC BAA-477 / NRRL B-23932 / Pf-5), this protein is Large ribosomal subunit protein uL30.